The primary structure comprises 254 residues: 5-oxoprolinase subunit A (254 aa).

It belongs to the LamB/PxpA family. In terms of assembly, forms a complex composed of PxpA, PxpB and PxpC.

The catalysed reaction is 5-oxo-L-proline + ATP + 2 H2O = L-glutamate + ADP + phosphate + H(+). Functionally, catalyzes the cleavage of 5-oxoproline to form L-glutamate coupled to the hydrolysis of ATP to ADP and inorganic phosphate. This is 5-oxoprolinase subunit A from Acinetobacter baumannii (strain AB307-0294).